The sequence spans 771 residues: MKYSKLLLLLVSVVQALDVPRKPHAPTGEGSKRLTFNETVVKQAITPTSRSVQWLSGAEDGSYVYAAEDGSLTIENIVTNESRTLIPADKIPTGKEAFNYWIHPDLSSVLWASNHTKQYRHSFFADYYVQDVESLKSVPLMPDQEGDIQYAQWSPVGNTIAFVRENDLYVWDNGTVTRITDDGGPDMFHGVPDWIYEEEILGDRYALWFSPDGEYLAYLSFNETGVPTYTVQYYMDNQEIAPAYPWELKIRYPKVSQTNPTVTLSLLNIASKEVKQAPIDAFESTDLIIGEVAWLTDTHTTVAAKAFNRVQDQQKVVAVDTASNKATVISDRDGTDGWLDNLLSMKYIGPIKPSDKDAYYIDISDHSGWAHLYLFPVSGGEPIPLTKGDWEVTSILSIDQERQLVYYLSTQHHSTERHLYSVSYSTFAVTPLVDDTVAAYWSASFSANSGYYILTYGGPDVPYQELYTTNSTKPLRTITDNAKVLEQIKDYALPNITYFELPLPSGETLNVMQRLPPGFSPDKKYPILFTPYGGPGAQEVTKRWQALNFKAYVASDSELEYVTWTVDNRGTGFKGRKFRSAVTRQLGLLEAEDQIYAAQQAANIPWIDADHIGIWGWSFGGYLTSKVLEKDSGAFTLGVITAPVSDWRFYDSMYTERYMKTLSTNEEGYETSAVRKTDGFKNVEGGFLIQHGTGDDNVHFQNSAALVDLLMGDGVSPEKLHSQWFTDSDHGISYHGGGVFLYKQLARKLYQEKNRQTQVLMHQWTKKDLEE.

The signal sequence occupies residues 1–16 (MKYSKLLLLLVSVVQA). N-linked (GlcNAc...) asparagine glycans are attached at residues asparagine 37, asparagine 80, asparagine 114, asparagine 173, asparagine 222, asparagine 470, and asparagine 495. Catalysis depends on charge relay system residues serine 618, aspartate 695, and histidine 730.

The protein belongs to the peptidase S9B family.

Its subcellular location is the secreted. The catalysed reaction is Release of an N-terminal dipeptide, Xaa-Yaa-|-Zaa-, from a polypeptide, preferentially when Yaa is Pro, provided Zaa is neither Pro nor hydroxyproline.. Extracellular dipeptidyl-peptidase which removes N-terminal dipeptides sequentially from polypeptides having unsubstituted N-termini provided that the penultimate residue is proline. This is Probable dipeptidyl peptidase 4 (dpp4) from Aspergillus flavus (strain ATCC 200026 / FGSC A1120 / IAM 13836 / NRRL 3357 / JCM 12722 / SRRC 167).